A 132-amino-acid polypeptide reads, in one-letter code: Small ribosomal subunit protein uS9 (132 aa).

The protein belongs to the universal ribosomal protein uS9 family.

The chain is Small ribosomal subunit protein uS9 (rps9) from Halobacterium salinarum (strain ATCC 700922 / JCM 11081 / NRC-1) (Halobacterium halobium).